A 124-amino-acid chain; its full sequence is Ribonuclease pancreatic (124 aa).

Residues 1–13 (KETAAAKFERQHI) show a composition bias toward basic and acidic residues. The disordered stretch occupies residues 1–24 (KETAAAKFERQHIDSNPSSVSSSN). Positions 7 and 10 each coordinate substrate. Residue His12 is the Proton acceptor of the active site. Low complexity predominate over residues 15-24 (SNPSSVSSSN). 4 disulfides stabilise this stretch: Cys26-Cys84, Cys40-Cys95, Cys58-Cys110, and Cys65-Cys72. Residue Asn34 is glycosylated (N-linked (GlcNAc...) asparagine; partial). Residues 41–45 (KPVNT), Lys66, and Arg85 each bind substrate. Residue His119 is the Proton donor of the active site.

This sequence belongs to the pancreatic ribonuclease family. Monomer. Interacts with and forms tight 1:1 complexes with RNH1. Dimerization of two such complexes may occur. Interaction with RNH1 inhibits this protein. Pancreas.

Its subcellular location is the secreted. It carries out the reaction an [RNA] containing cytidine + H2O = an [RNA]-3'-cytidine-3'-phosphate + a 5'-hydroxy-ribonucleotide-3'-[RNA].. It catalyses the reaction an [RNA] containing uridine + H2O = an [RNA]-3'-uridine-3'-phosphate + a 5'-hydroxy-ribonucleotide-3'-[RNA].. In terms of biological role, endonuclease that catalyzes the cleavage of RNA on the 3' side of pyrimidine nucleotides. Acts on single-stranded and double-stranded RNA. The sequence is that of Ribonuclease pancreatic (RNASE1) from Antilocapra americana (Pronghorn).